We begin with the raw amino-acid sequence, 359 residues long: Peptide methionine sulfoxide reductase MsrA/MsrB (359 aa).

Residues R36–K189 are peptide methionine sulfoxide reductase A. C44 is an active-site residue. In terms of domain architecture, MsrB spans D206–L329. The active-site Nucleophile is C318.

This sequence in the N-terminal section; belongs to the MsrA Met sulfoxide reductase family. The protein in the C-terminal section; belongs to the MsrB Met sulfoxide reductase family.

The catalysed reaction is L-methionyl-[protein] + [thioredoxin]-disulfide + H2O = L-methionyl-(S)-S-oxide-[protein] + [thioredoxin]-dithiol. It carries out the reaction [thioredoxin]-disulfide + L-methionine + H2O = L-methionine (S)-S-oxide + [thioredoxin]-dithiol. It catalyses the reaction L-methionyl-[protein] + [thioredoxin]-disulfide + H2O = L-methionyl-(R)-S-oxide-[protein] + [thioredoxin]-dithiol. In terms of biological role, has an important function as a repair enzyme for proteins that have been inactivated by oxidation. Catalyzes the reversible oxidation-reduction of methionine sulfoxide in proteins to methionine. This is Peptide methionine sulfoxide reductase MsrA/MsrB (msrAB) from Helicobacter pylori (strain J99 / ATCC 700824) (Campylobacter pylori J99).